A 55-amino-acid chain; its full sequence is Trypsin inhibitor ClTI-1 (55 aa).

Positions S1–C55 constitute a Kazal-like domain. 3 disulfide bridges follow: C6–C37, C15–C34, and C23–C55.

The protein resides in the secreted. Inhibits trypsin and plasmin. This Gallus gallus (Chicken) protein is Trypsin inhibitor ClTI-1.